The chain runs to 100 residues: Small ribosomal subunit protein uS14c (100 aa).

This sequence belongs to the universal ribosomal protein uS14 family. In terms of assembly, part of the 30S ribosomal subunit.

It is found in the plastid. The protein localises to the chloroplast. Functionally, binds 16S rRNA, required for the assembly of 30S particles. The sequence is that of Small ribosomal subunit protein uS14c from Populus alba (White poplar).